The sequence spans 372 residues: CXADR-like membrane protein (372 aa).

The N-terminal stretch at 1–17 (MSLFFLWLVTYYVGTLG) is a signal peptide. Ig-like C2-type domains are found at residues 18-126 (THTE…VILK) and 134-223 (PKCE…VRVT). Residues 18–234 (THTEIKRVAE…QYVQSIGMVA (217 aa)) are Extracellular-facing. Cystine bridges form between Cys-34–Cys-110 and Cys-152–Cys-207. Asn-73 and Asn-196 each carry an N-linked (GlcNAc...) asparagine glycan. The helical transmembrane segment at 235-255 (GAVTGIVAGALLIFLLIWLLI) threads the bilayer. Residues 256–372 (RRKSKERYEE…PSQSRAFQTV (117 aa)) lie on the Cytoplasmic side of the membrane. Basic and acidic residues predominate over residues 263–280 (YEEEDRPNEIREDAEAPR). The disordered stretch occupies residues 263 to 372 (YEEEDRPNEI…PSQSRAFQTV (110 aa)). Composition is skewed to low complexity over residues 287–313 (SSSS…ASRS) and 352–361 (LTKAETTLST). Residues 362–372 (MPSQSRAFQTV) show a composition bias toward polar residues.

In terms of tissue distribution, predominantly expressed in the white adipose tissue.

The protein resides in the cell junction. It is found in the tight junction. Its subcellular location is the cell membrane. Functionally, may be involved in the cell-cell adhesion. May play a role in adipocyte differentiation and development of obesity. Is required for normal small intestine development. In Rattus norvegicus (Rat), this protein is CXADR-like membrane protein (Clmp).